A 397-amino-acid chain; its full sequence is uncharacterized protein (397 aa).

11 helical membrane-spanning segments follow: residues Asn-9–Thr-29, Leu-38–Leu-58, Phe-85–Ala-105, Ile-112–Phe-132, Met-148–Val-168, Pro-182–Ala-202, Ala-226–Ser-246, Val-271–Thr-291, Trp-310–Ala-330, Val-331–Leu-351, and His-365–Gly-385.

Belongs to the NRAMP family.

It localises to the cell membrane. This is an uncharacterized protein from Haemophilus influenzae (strain ATCC 51907 / DSM 11121 / KW20 / Rd).